The sequence spans 415 residues: Tyrosine--tRNA ligase (415 aa).

A 'HIGH' region motif is present at residues 54-63 (PTGTDIHIGH). Residues 248-252 (KMSKS) carry the 'KMSKS' region motif. Lysine 251 lines the ATP pocket. The S4 RNA-binding domain occupies 351–415 (AKAFYLFSKM…GKKKFLRVST (65 aa)).

This sequence belongs to the class-I aminoacyl-tRNA synthetase family. TyrS type 2 subfamily. As to quaternary structure, homodimer.

It is found in the cytoplasm. The enzyme catalyses tRNA(Tyr) + L-tyrosine + ATP = L-tyrosyl-tRNA(Tyr) + AMP + diphosphate + H(+). In terms of biological role, catalyzes the attachment of tyrosine to tRNA(Tyr) in a two-step reaction: tyrosine is first activated by ATP to form Tyr-AMP and then transferred to the acceptor end of tRNA(Tyr). This Prochlorococcus marinus (strain NATL2A) protein is Tyrosine--tRNA ligase.